The sequence spans 635 residues: Extracellular metalloproteinase mep (635 aa).

A signal peptide spans 1-19; it reads MMRGLLLAGALGLPLAVLA. A propeptide spanning residues 20–246 is cleaved from the precursor; sequence HPTHHAHGLQ…VHGVVDYVAE (227 aa). The N-linked (GlcNAc...) asparagine glycan is linked to asparagine 287. Positions 290–309 are enriched in polar residues; sequence TTRGNNGIAQSNPTGGSQYL. The interval 290–311 is disordered; that stretch reads TTRGNNGIAQSNPTGGSQYLKN. A Zn(2+)-binding site is contributed by histidine 430. Glutamate 431 is an active-site residue. Position 434 (histidine 434) interacts with Zn(2+).

This sequence belongs to the peptidase M36 family. Zn(2+) serves as cofactor.

The protein localises to the secreted. Functionally, secreted metalloproteinase that allows assimilation of proteinaceous substrates. This Aspergillus flavus (strain ATCC 200026 / FGSC A1120 / IAM 13836 / NRRL 3357 / JCM 12722 / SRRC 167) protein is Extracellular metalloproteinase mep (mep).